A 600-amino-acid chain; its full sequence is Elongation factor 4 (600 aa).

Residues 7-189 (SLIRNFSIIA…ALVQRLPAPT (183 aa)) enclose the tr-type G domain. Residues 19 to 24 (DHGKST) and 136 to 139 (NKID) contribute to the GTP site.

It belongs to the TRAFAC class translation factor GTPase superfamily. Classic translation factor GTPase family. LepA subfamily.

The protein resides in the cell inner membrane. It carries out the reaction GTP + H2O = GDP + phosphate + H(+). Its function is as follows. Required for accurate and efficient protein synthesis under certain stress conditions. May act as a fidelity factor of the translation reaction, by catalyzing a one-codon backward translocation of tRNAs on improperly translocated ribosomes. Back-translocation proceeds from a post-translocation (POST) complex to a pre-translocation (PRE) complex, thus giving elongation factor G a second chance to translocate the tRNAs correctly. Binds to ribosomes in a GTP-dependent manner. The polypeptide is Elongation factor 4 (Gluconobacter oxydans (strain 621H) (Gluconobacter suboxydans)).